Consider the following 155-residue polypeptide: UPF0266 membrane protein LMHCC_1856 (155 aa).

3 helical membrane passes run I8–I28, R46–F66, and P70–F90.

This sequence belongs to the UPF0266 family.

The protein localises to the cell membrane. In Listeria monocytogenes serotype 4a (strain HCC23), this protein is UPF0266 membrane protein LMHCC_1856.